The primary structure comprises 562 residues: Solute carrier family 22 member 6 (562 aa).

At 1–15 (MPFSELLEQVGSTGR) the chain is on the cytoplasmic side. Residues 16 to 36 (FQVLHVTLLCIPVLMMASHNL) traverse the membrane as a helical segment. Over 37–147 (LQNFVATVPS…LVCDMHSFKQ (111 aa)) the chain is Extracellular. A helical membrane pass occupies residues 148-168 (MGQTIYMGGVLVGALLFGGLS). The Cytoplasmic portion of the chain corresponds to 169 to 174 (DRYGRR). A helical membrane pass occupies residues 175–195 (ILLLISNLLMAVSGTCAAFSS). The Extracellular segment spans residues 196-205 (SFSLFCVFRF). A helical membrane pass occupies residues 206 to 226 (GCGLALSGLGLNTFSLIVEWI). Topologically, residues 227–235 (PTRIRTAVG) are cytoplasmic. Residues 236–256 (TTTGYCYTLGQLILVLLAYFI) form a helical membrane-spanning segment. The Extracellular segment spans residues 257-260 (RDWR). A helical transmembrane segment spans residues 261–281 (WLTLAVSLPFYVFFLIAWWFH). Topologically, residues 282-351 (ESSRWLALSN…FNTPAMRKRT (70 aa)) are cytoplasmic. The chain crosses the membrane as a helical span at residues 352–372 (LCLSAVWLSTSFAYYGLAMDL). The Extracellular segment spans residues 373–378 (DKFGVD). Residues 379-399 (IYLIQVIFGAVDIPAKVVVVV) traverse the membrane as a helical segment. At 400-408 (SMSLIGRRR) the chain is on the cytoplasmic side. The helical transmembrane segment at 409–429 (SQCAVLVVAGITILLNLLVPY) threads the bilayer. Topologically, residues 430–444 (DKQTIRTCLAVLGKG) are extracellular. A helical transmembrane segment spans residues 445 to 465 (CLAASFNCCYLYSGELFPTII). Residues 466-468 (RQN) are Cytoplasmic-facing. A helical membrane pass occupies residues 469–489 (GMGWVSMMARIGAMVAPMVLL). The Extracellular portion of the chain corresponds to 490–495 (TRDYIP). Residues 496-516 (WLPGLIYGGAPILSGLAAIFL) traverse the membrane as a helical segment. Residues 517 to 562 (PETLGYPLPDTIQDVEESGSGRKSKMSTKETITLQDKQANLLKQSA) are Cytoplasmic-facing.

It belongs to the major facilitator (TC 2.A.1) superfamily. Organic cation transporter (TC 2.A.1.19) family. Post-translationally, glycosylated. Glycosylation is necessary for proper targeting of the transporter to the plasma membrane.

The protein localises to the cell membrane. The protein resides in the basolateral cell membrane. It localises to the basal cell membrane. Its function is as follows. Involved in the renal elimination of endogenous and exogenous organic anions. Functions as organic anion exchanger when the uptake of one molecule of organic anion is coupled with an efflux of one molecule of endogenous dicarboxylic acid (glutarate, ketoglutarate, etc). Mediates the sodium-independent uptake of p-aminohippurate (PAH), 2,3-dimercapto-1-propanesulfonic acid (DMPS), cidofovir, adefovir, 9-(2-phosphonylmethoxyethyl) guanine (PMEG), 9-(2-phosphonylmethoxyethyl) diaminopurine (PMEDAP), ochratoxin (OTA), acyclovir (ACV), 3'-azido-3-'deoxythymidine (AZT), cimetidine (CMD), 2,4-dichloro-phenoxyacetate (2,4-D), hippurate (HA), indoleacetate (IA), indoxyl sulfate (IS), 3-carboxy-4-methyl-5-propyl-2-furanpropionate (CMPF) and edaravone sulfate. Mediates the sodium-independent uptake of p-aminohippurate (PAH). PAH uptake is inhibited by p-chloromercuribenzenesulphonate (PCMBS), diethyl pyrocarbonate (DEPC), indomethacin, sulindac, diclofenac, carprofen, okadaic acid, benzothiazolylcysteine (BTC), S-chlorotrifluoroethylcysteine (CTFC), cysteine S-conjugates S-dichlorovinylcysteine (DCVC), furosemide, steviol, phorbol 12-myristate 13-acetate (PMA), calcium ionophore A23187, benzylpenicillin, bumetamide, losartan, probenecid, phenol red, urate, glutarate and alpha-ketoglutarate. PAH uptake is inhibited by glutarate. The polypeptide is Solute carrier family 22 member 6 (SLC22A6) (Pseudopleuronectes americanus (Winter flounder)).